Here is a 217-residue protein sequence, read N- to C-terminus: TLD domain-containing protein 2 (217 aa).

The tract at residues 1–48 is disordered; that stretch reads MKSLRWRYTRLPSQVEDALSGEEDKEEEEEKEEETTPAPTPVPEHPMV. Residues 19 to 35 show a composition bias toward acidic residues; the sequence is LSGEEDKEEEEEKEEET. The TLDc domain occupies 56–217; it reads QVLGASEMSQ…ISELEAWVLS (162 aa).

It belongs to the OXR1 family.

In Bos taurus (Bovine), this protein is TLD domain-containing protein 2 (TLDC2).